Here is a 493-residue protein sequence, read N- to C-terminus: Rho guanine nucleotide exchange factor 9 (493 aa).

The 60-residue stretch at 15 to 74 folds into the SH3 domain; the sequence is DSIVSAEAVWDHVTMANRGVAFKAGDVIKVLDASNKDWWWGQIDDEEGWFPASFVRLWVN. Positions 107-117 are interaction with GPHN; the sequence is RDQMRANVINE. Residues 110-294 enclose the DH domain; the sequence is MRANVINEIM…RNVTQQINER (185 aa). A PH domain is found at 325-432; it reads ELIYTGEMAW…WLRAFREERK (108 aa). A disordered region spans residues 453–473; sequence AMTVRKASKQKGRVGEEENQS.

Interacts with GPHN. In terms of tissue distribution, detected in brain, throughout the gray matter. Detected at low levels in heart and skeletal muscle.

It is found in the cytoplasm. The protein resides in the postsynaptic density. Acts as a guanine nucleotide exchange factor (GEF) for CDC42. Promotes formation of GPHN clusters. This Rattus norvegicus (Rat) protein is Rho guanine nucleotide exchange factor 9 (Arhgef9).